The sequence spans 387 residues: Radial spoke protein 14 (387 aa).

ARM repeat units lie at residues Lys24–Ser67, Pro69–Ala109, Glu111–Arg150, Thr154–Gln198, Gly204–Thr244, Arg245–Ile286, Glu289–Glu328, and Pro330–Phe370.

This sequence belongs to the flagellar radial spoke RSP14 family.

The protein localises to the cytoplasm. The protein resides in the cytoskeleton. It is found in the flagellum axoneme. This chain is Radial spoke protein 14 (RSP14), found in Chlamydomonas reinhardtii (Chlamydomonas smithii).